A 200-amino-acid polypeptide reads, in one-letter code: MESQSRRRRPLRRPETLVQGEAAESDSDLSASSSEEEELYLGPSGPTRGRPTGLRVAGEAAETDSDPEPEPKAAPRDLPPLVVQRETAGEAWAEEEAPAPAPARSLLQLRLAESQARLDHDVAAAVSGVYRRAGRDVAALAGRLAAAQAAGLAAAHSVRLARGDLCALAERLDIVASCRLLPDIRGVPGTEPEQDPGPRA.

The span at 1–11 (MESQSRRRRPL) shows a compositional bias: basic residues. Residues 1 to 81 (MESQSRRRRP…KAAPRDLPPL (81 aa)) form a disordered region. The segment covering 41-55 (LGPSGPTRGRPTGLR) has biased composition (low complexity). At Thr-63 the chain carries Phosphothreonine. Ser-65 carries the post-translational modification Phosphoserine.

It belongs to the BLOC1S3 family. As to quaternary structure, component of the biogenesis of lysosome-related organelles complex 1 (BLOC-1) composed of BLOC1S1, BLOC1S2, BLOC1S3, BLOC1S4, BLOC1S5, BLOC1S6, DTNBP1/BLOC1S7 and SNAPIN/BLOC1S8. Octamer composed of one copy each BLOC1S1, BLOC1S2, BLOC1S3, BLOC1S4, BLOC1S5, BLOC1S6, DTNBP1/BLOC1S7 and SNAPIN/BLOC1S8. The BLOC-1 complex associates with the AP-3 protein complex and membrane protein cargos. Interacts directly with BLOC1S2. Interacts with BLOC1S4, BLOC1S5 and BLOC1S6. Post-translationally, phosphorylated.

Its subcellular location is the cytoplasm. Its function is as follows. Component of the BLOC-1 complex, a complex that is required for normal biogenesis of lysosome-related organelles (LRO), such as platelet dense granules and melanosomes. In concert with the AP-3 complex, the BLOC-1 complex is required to target membrane protein cargos into vesicles assembled at cell bodies for delivery into neurites and nerve terminals. The BLOC-1 complex, in association with SNARE proteins, is also proposed to be involved in neurite extension. Plays a role in intracellular vesicle trafficking. The sequence is that of Biogenesis of lysosome-related organelles complex 1 subunit 3 (BLOC1S3) from Bos taurus (Bovine).